We begin with the raw amino-acid sequence, 110 residues long: MSFCSFSGGEIYKDHFESGMYVCAQCGYELFSSRSKYEHSSPWPAFTETIHEDSVSKQEERWGAYKVRCGKCGNGLGHEFVNDGPKHGLSRFUIFSSSLKFIPKVKNEQQ.

Residues 1–104 (MSFCSFSGGE…FSSSLKFIPK (104 aa)) enclose the MsrB domain. 4 residues coordinate Zn(2+): Cys-23, Cys-26, Cys-69, and Cys-72. Sec-93 acts as the Nucleophile in catalysis. Position 93 (Sec-93) is a non-standard amino acid, selenocysteine.

Belongs to the MsrB Met sulfoxide reductase family. Zn(2+) serves as cofactor. In the embryo, expressed in the polster, paraxial mesoderm, tectum, otic vesicle and liver.

Its subcellular location is the cytoplasm. The protein localises to the nucleus. It localises to the cytoskeleton. It catalyses the reaction L-methionyl-[protein] + [thioredoxin]-disulfide + H2O = L-methionyl-(R)-S-oxide-[protein] + [thioredoxin]-dithiol. The enzyme catalyses [thioredoxin]-disulfide + L-methionine + H2O = L-methionine (R)-S-oxide + [thioredoxin]-dithiol. Methionine-sulfoxide reductase that specifically reduces methionine (R)-sulfoxide back to methionine. While in many cases, methionine oxidation is the result of random oxidation following oxidative stress, methionine oxidation is also a post-translational modification that takes place on specific residue. Acts as a regulator of actin assembly by reducing methionine (R)-sulfoxide mediated by MICALs (mical1, mical2 or mical3) on actin, thereby promoting filament repolymerization. Plays a role in innate immunity by reducing oxidized actin, leading to actin repolymerization in macrophages. The protein is Methionine-R-sulfoxide reductase B1-A (msrb1) of Danio rerio (Zebrafish).